The chain runs to 183 residues: Protein SHI RELATED SEQUENCE 6 (183 aa).

Residues Cys41, Cys44, Cys52, Cys57, Cys61, and Cys68 each coordinate Zn(2+). Positions Cys41–Cys68 form a DNA-binding region, zn(2)-C6 fungal-type; degenerate. Residues Ser79–Pro88 are compositionally biased toward low complexity. Residues Ser79–Glu121 are disordered. The segment covering Gln100 to Ser113 has biased composition (polar residues). A Required for homo- and heterodimerization motif is present at residues Ile157–His160.

Belongs to the SHI protein family.

The protein localises to the nucleus. Its function is as follows. Transcription activator that binds DNA on 5'-ACTCTAC-3' and promotes auxin homeostasis-regulating gene expression (e.g. YUC genes), as well as genes affecting stamen development, cell expansion and timing of flowering. Synergistically with other SHI-related proteins, regulates gynoecium, stamen and leaf development in a dose-dependent manner, controlling apical-basal patterning. Promotes style and stigma formation, and influences vascular development during gynoecium development. May also have a role in the formation and/or maintenance of the shoot apical meristem (SAM). The chain is Protein SHI RELATED SEQUENCE 6 (SRS6) from Arabidopsis thaliana (Mouse-ear cress).